A 451-amino-acid polypeptide reads, in one-letter code: Phenylalanine-4-hydroxylase (451 aa).

Serine 16 carries the post-translational modification Phosphoserine; by PKA. The ACT domain occupies 35–113; it reads SLIFSLKEEV…TVHELSRDKK (79 aa). Positions 284, 289, and 329 each coordinate Fe cation.

It belongs to the biopterin-dependent aromatic amino acid hydroxylase family. In terms of assembly, homodimer and homotetramer. Fe(2+) serves as cofactor. Phosphorylation at Ser-16 increases basal activity and facilitates activation by the substrate phenylalanine.

The enzyme catalyses (6R)-L-erythro-5,6,7,8-tetrahydrobiopterin + L-phenylalanine + O2 = (4aS,6R)-4a-hydroxy-L-erythro-5,6,7,8-tetrahydrobiopterin + L-tyrosine. It functions in the pathway amino-acid degradation; L-phenylalanine degradation; acetoacetate and fumarate from L-phenylalanine: step 1/6. Its activity is regulated as follows. N-terminal region of PAH is thought to contain allosteric binding sites for phenylalanine and to constitute an 'inhibitory' domain that regulates the activity of a catalytic domain in the C-terminal portion of the molecule. Functionally, catalyzes the hydroxylation of L-phenylalanine to L-tyrosine. The protein is Phenylalanine-4-hydroxylase (PAH) of Bos taurus (Bovine).